The following is a 400-amino-acid chain: Tryptophan--tRNA ligase (400 aa).

Residues 12 to 20 carry the 'HIGH' region motif; the sequence is PTGALHLGH. The segment at 173-241 is insert; that stretch reads REPGFEQKAL…RLFGYLEGAR (69 aa). Residues 265–269 carry the 'KMSKS' region motif; sequence KMSKS. Residue K268 participates in ATP binding. Positions 280-305 are disordered; it reads KASVEKKVRTMPTDPARVRRTDPGDP. A compositionally biased stretch (basic and acidic residues) spans 295 to 304; that stretch reads ARVRRTDPGD.

Belongs to the class-I aminoacyl-tRNA synthetase family. In terms of assembly, homodimer.

It is found in the cytoplasm. It carries out the reaction tRNA(Trp) + L-tryptophan + ATP = L-tryptophyl-tRNA(Trp) + AMP + diphosphate + H(+). In Ralstonia nicotianae (strain ATCC BAA-1114 / GMI1000) (Ralstonia solanacearum), this protein is Tryptophan--tRNA ligase (trpS).